Consider the following 365-residue polypeptide: Peptide chain release factor 2 (365 aa).

N5-methylglutamine is present on glutamine 252.

The protein belongs to the prokaryotic/mitochondrial release factor family. In terms of processing, methylated by PrmC. Methylation increases the termination efficiency of RF2.

It is found in the cytoplasm. In terms of biological role, peptide chain release factor 2 directs the termination of translation in response to the peptide chain termination codons UGA and UAA. The polypeptide is Peptide chain release factor 2 (Aliivibrio fischeri (strain ATCC 700601 / ES114) (Vibrio fischeri)).